The chain runs to 183 residues: Bifunctional protein PyrR (183 aa).

A PRPP-binding motif is present at residues 100–112 (VILVDDVLYTGRT).

It belongs to the purine/pyrimidine phosphoribosyltransferase family. PyrR subfamily.

It carries out the reaction UMP + diphosphate = 5-phospho-alpha-D-ribose 1-diphosphate + uracil. Regulates the transcription of the pyrimidine nucleotide (pyr) operon in response to exogenous pyrimidines. Its function is as follows. Also displays a weak uracil phosphoribosyltransferase activity which is not physiologically significant. This Deinococcus deserti (strain DSM 17065 / CIP 109153 / LMG 22923 / VCD115) protein is Bifunctional protein PyrR.